A 161-amino-acid polypeptide reads, in one-letter code: Lipoprotein signal peptidase (161 aa).

The next 4 helical transmembrane spans lie at 8 to 28 (LKYFILAILIIAADLYTKYLA), 40 to 60 (ITSFFNLTLLYNHGAAFSLLS), 67 to 87 (QMIMFSTISLIAAIVLIYLII), and 91 to 111 (ITEKINLFSFALILGGALGNF). Active-site residues include Asp-122 and Asp-140. The chain crosses the membrane as a helical span at residues 136–156 (FNIADSAITCGVVILIAASLF).

This sequence belongs to the peptidase A8 family.

The protein localises to the cell inner membrane. It catalyses the reaction Release of signal peptides from bacterial membrane prolipoproteins. Hydrolyzes -Xaa-Yaa-Zaa-|-(S,diacylglyceryl)Cys-, in which Xaa is hydrophobic (preferably Leu), and Yaa (Ala or Ser) and Zaa (Gly or Ala) have small, neutral side chains.. The protein operates within protein modification; lipoprotein biosynthesis (signal peptide cleavage). Functionally, this protein specifically catalyzes the removal of signal peptides from prolipoproteins. In Francisella tularensis subsp. novicida (strain U112), this protein is Lipoprotein signal peptidase.